Reading from the N-terminus, the 144-residue chain is Large ribosomal subunit protein uL14 (144 aa).

The tract at residues 107-144 (NEGYTHSQHSNQREGGERIQAQPSPPHARRAVKTSFCR) is disordered.

It belongs to the universal ribosomal protein uL14 family. As to quaternary structure, part of the 50S ribosomal subunit. Forms a cluster with proteins L3 and L19. In the 70S ribosome, L14 and L19 interact and together make contacts with the 16S rRNA in bridges B5 and B8.

In terms of biological role, binds to 23S rRNA. Forms part of two intersubunit bridges in the 70S ribosome. This is Large ribosomal subunit protein uL14 from Xanthobacter autotrophicus (strain ATCC BAA-1158 / Py2).